Consider the following 411-residue polypeptide: Metal-binding regulatory protein cuf1 (411 aa).

The copper-fist DNA-binding region spans 1-40 (MVVINNVKMACMKCIRGHRSSTCKHNDRELFPIRPKGRPI). Residues cysteine 11, cysteine 14, cysteine 23, and histidine 25 each coordinate Zn(2+). The disordered stretch occupies residues 63–92 (SRKKGSKCSTSSTTDLDSSSASNSSCSIPS). The span at 69–92 (KCSTSSTTDLDSSSASNSSCSIPS) shows a compositional bias: low complexity.

The protein localises to the cytoplasm. It localises to the nucleus. Its function is as follows. Copper-sensing transcription factor that regulates iron uptake genes. Under copper starvation conditions activates the transcription of the copper transport genes, ctr4, ctr5 and ctr6. The sequence is that of Metal-binding regulatory protein cuf1 (cuf1) from Schizosaccharomyces pombe (strain 972 / ATCC 24843) (Fission yeast).